A 500-amino-acid polypeptide reads, in one-letter code: MAGHSNSMALFSFSLLWLCSGVLGTDTEERLVEHLLDPSRYNKLIRPATNGSELVTVQLMVSLAQLISVHEREQIMTTNVWLTQEWEDYRLTWKPEDFDNMKKVRLPSKHIWLPDVVLYNNADGMYEVSFYSNAVVSYDGSIFWLPPAIYKSACKIEVKHFPFDQQNCTMKFRSWTYDRTEIDLVLKSDVASLDDFTPSGEWDIIALPGRRNENPDDSTYVDITYDFIIRRKPLFYTINLIIPCVLITSLAILVFYLPSDCGEKMTLCISVLLALTVFLLLISKIVPPTSLDVPLVGKYLMFTMVLVTFSIVTSVCVLNVHHRSPTTHTMAPWVKVVFLEKLPTLLFLQQPRHRCARQRLRLRRRQREREGAGALFFREGPAADPCTCFVNPASVQGLAGAFRAEPTAAGPGRSVGPCSCGLREAVDGVRFIADHMRSEDDDQSVREDWKYVAMVIDRLFLWIFVFVCVFGTVGMFLQPLFQNYTATTFLHPDHSAPSSK.

An N-terminal signal peptide occupies residues 1–24; it reads MAGHSNSMALFSFSLLWLCSGVLG. Residues 25-237 are Extracellular-facing; the sequence is TDTEERLVEH…IIRRKPLFYT (213 aa). N-linked (GlcNAc...) asparagine glycosylation is found at N50 and N167. A disulfide bridge links C154 with C168. Residues 238-258 form a helical membrane-spanning segment; the sequence is INLIIPCVLITSLAILVFYLP. Residues 259–266 lie on the Cytoplasmic side of the membrane; the sequence is SDCGEKMT. Residues 267 to 287 traverse the membrane as a helical segment; the sequence is LCISVLLALTVFLLLISKIVP. Residues 288–299 lie on the Extracellular side of the membrane; the sequence is PTSLDVPLVGKY. A helical membrane pass occupies residues 300–320; that stretch reads LMFTMVLVTFSIVTSVCVLNV. Residues 321–458 are Cytoplasmic-facing; sequence HHRSPTTHTM…WKYVAMVIDR (138 aa). A helical transmembrane segment spans residues 459–479; it reads LFLWIFVFVCVFGTVGMFLQP.

This sequence belongs to the ligand-gated ion channel (TC 1.A.9) family. Acetylcholine receptor (TC 1.A.9.1) subfamily. Beta-2/CHRNB2 sub-subfamily. In terms of assembly, neuronal AChR is a heteropentamer composed of two different types of subunits: alpha and beta. CHRNB2/Beta-2 subunit can be combined to CHRNA2/alpha-2, CHRNA3/alpha-3 or CHRNA4/alpha-4, CHRNA5/alpha-5, CHRNA6/alpha-6 and CHRNB3/beta-3 to give rise to functional receptors. CHRNA2:CHRNB2 and CHRNA4:CHRNB2 nAChR complexes exist in two subtypes: LS (low agonist sensitivity) with a (CHRNA2/4)3:(CHRNB2)2 and HS (high agonist sensitivity) with a (CHRNA2/4)2:(CHRNB2)3 stoichiometry; the subtypes differ in their subunit binding interfaces which are involved in ligand binding. Cells produce predominantly an (CHRNA4)3:(CHRNB2)2 nAChR. The stoichiometric form (CHRNA4)2:(CHRNB2)3 expression is selectively up-regulated by nicotine and has lower single channel conductance and calcium permeability. Also part of the stoichiometric forms: (CHRNA4:CHRNB2)2:CHRNB3 or (CHRNA6:CHRNB2)2:CHRNB3. Can form heteropentamers with CHRNA7, mainly found in basal forebrain cholinergic neurons. Interacts with RIC3; which is required for proper folding and assembly. Interacts with LYPD6. As to expression, expressed in most regions of the CNS.

The protein resides in the synaptic cell membrane. The protein localises to the cell membrane. The catalysed reaction is Ca(2+)(in) = Ca(2+)(out). It carries out the reaction K(+)(in) = K(+)(out). The enzyme catalyses Na(+)(in) = Na(+)(out). Its activity is regulated as follows. Activated by a myriad of ligands such as acetylcholine, cytisine, nicotine, choline and epibatidine. Channel potentiation by calcium is stoichiometry-selective, CHRNA4:CHRNB2 nACh receptor is achieved by calcium association with topographically distinct sites framed by anionic residues within the CHRNA4 subunit and between the CHRNA4 and CHRNB2 subunits. Oligomeric amyloid-beta protein 42 activates specifially CHRNA7:CHRNB2 nAchRs. nAChR activity is inhibited by the antagonist alpha-conotoxins BuIA, PnIA, PnIC, GID and MII, small disulfide-constrained peptides from cone snails. In terms of biological role, component of neuronal acetylcholine receptors (nAChRs) that function as pentameric, ligand-gated cation channels with high calcium permeability among other activities. nAChRs are excitatory neurotrasnmitter receptors formed by a collection of nAChR subunits known to mediate synaptic transmission in the nervous system and the neuromuscular junction. Each nAchR subunit confers differential attributes to channel properties, including activation, deactivation and desensitization kinetics, pH sensitivity, cation permeability, and binding to allosteric modulators. CHRNB2 forms heteropentameric neuronal acetylcholine receptors with CHRNA2, CHRNA3, CHRNA4 and CHRNA6, as well as CHRNA5 and CHRNB3 as accesory subunits. Found in two major stoichiometric forms,(CHRNA4)3:(CHRNB2)2 and (CHRNA4)2:(CHRNB2)3, the two stoichiometric forms differ in their unitary conductance, calcium permeability, ACh sensitivity and potentiation by divalent cation. Heteropentameric channels with CHRNA6 and CHRNA4 exhibit high sensitivity to ACh and nicotine and are predominantly expressed in only a few brain areas, including dopaminergic neurons, norepirephrine neurons and cells of the visual system. nAChrs containing CHRNA6 subunits mediate endogenous cholinergic modulation of dopamine and gamma-aminobutyric acid (GABA) release in response to nicotine at nerve terminals. Also forms functional nAChRs with other subunits such as CHRNA7:CHRNB2, mainly expressed in basal forebrain cholinergic neurons. This chain is Neuronal acetylcholine receptor subunit beta-2 (Chrnb2), found in Rattus norvegicus (Rat).